Reading from the N-terminus, the 610-residue chain is WD repeat-containing protein 46 (610 aa).

A disordered region spans residues 1 to 103; that stretch reads METAPKPGKD…TQDPFPGPAP (103 aa). Residues 7–19 are compositionally biased toward basic and acidic residues; sequence PGKDVPPKKDKLQ. At serine 41 the chain carries Phosphoserine. The span at 65-77 shows a compositional bias: basic residues; sequence KKSRISKKPQVPK. 6 WD repeats span residues 193 to 234, 235 to 272, 274 to 312, 315 to 354, 357 to 396, and 399 to 436; these read LRQF…CEIN, VMEA…LHCI, RCDR…IVAA, ARAG…PLAK, CHRG…QPLS, and TLPH…SPPS. The interval 538 to 610 is disordered; the sequence is ERLGYDPQAK…RPSALDRFVR (73 aa). Residues 572 to 582 show a composition bias toward basic and acidic residues; that stretch reads VMDEEHRDKVR.

In terms of assembly, part of the small subunit (SSU) processome, composed of more than 70 proteins and the RNA chaperone small nucleolar RNA (snoRNA) U3. Interacts with DDX21, NCL, NOP2 and EBNA1BP2.

The protein resides in the nucleus. The protein localises to the nucleolus. In terms of biological role, scaffold component of the nucleolar structure. Required for localization of DDX21 and NCL to the granular compartment of the nucleolus. Part of the small subunit (SSU) processome, first precursor of the small eukaryotic ribosomal subunit. During the assembly of the SSU processome in the nucleolus, many ribosome biogenesis factors, an RNA chaperone and ribosomal proteins associate with the nascent pre-rRNA and work in concert to generate RNA folding, modifications, rearrangements and cleavage as well as targeted degradation of pre-ribosomal RNA by the RNA exosome. In Homo sapiens (Human), this protein is WD repeat-containing protein 46 (WDR46).